A 186-amino-acid polypeptide reads, in one-letter code: MKYIEVDEELYRHIASKTEHIGESASDILRRILGLQVESVVQDAPEEISHPSLERVSPKPVKVAKVITKMTSTAVSDFTSLIDADVLAAQKGAVGRFLFILDTVHRASPVQFEQVLQIQGRDRLYFATSKDALLKASKSANPKEIGQSGFWVTTNNNTAKKRTILSEVLLQFGTDEAQVTDIIEKI.

The interval 93-94 (AV) is interaction with DNA.

This sequence belongs to the SeqA family. As to quaternary structure, homodimer. Polymerizes to form helical filaments.

It localises to the cytoplasm. In terms of biological role, negative regulator of replication initiation, which contributes to regulation of DNA replication and ensures that replication initiation occurs exactly once per chromosome per cell cycle. Binds to pairs of hemimethylated GATC sequences in the oriC region, thus preventing assembly of replication proteins and re-initiation at newly replicated origins. Repression is relieved when the region becomes fully methylated. This is Negative modulator of initiation of replication from Shewanella halifaxensis (strain HAW-EB4).